The following is a 954-amino-acid chain: Leucine--tRNA ligase (954 aa).

The short motif at 67 to 78 (PYPSGAGLHVGH) is the 'HIGH' region element. Positions 729–733 (KMGKS) match the 'KMSKS' region motif. Lysine 732 is a binding site for ATP.

Belongs to the class-I aminoacyl-tRNA synthetase family.

It is found in the cytoplasm. The catalysed reaction is tRNA(Leu) + L-leucine + ATP = L-leucyl-tRNA(Leu) + AMP + diphosphate. This Salinispora tropica (strain ATCC BAA-916 / DSM 44818 / JCM 13857 / NBRC 105044 / CNB-440) protein is Leucine--tRNA ligase.